We begin with the raw amino-acid sequence, 386 residues long: Phosphoglycerate kinase (386 aa).

Substrate contacts are provided by residues 21–23 (DLN), R36, 59–62 (HLGR), R113, and R146. ATP contacts are provided by residues K197, E314, and 340 to 343 (GGDT).

This sequence belongs to the phosphoglycerate kinase family. As to quaternary structure, monomer.

The protein localises to the cytoplasm. The enzyme catalyses (2R)-3-phosphoglycerate + ATP = (2R)-3-phospho-glyceroyl phosphate + ADP. It functions in the pathway carbohydrate degradation; glycolysis; pyruvate from D-glyceraldehyde 3-phosphate: step 2/5. The chain is Phosphoglycerate kinase from Vibrio vulnificus (strain CMCP6).